Consider the following 93-residue polypeptide: MEMPRRFNTYCPHCHSHFEHEVEKVRSGRSSGTKWDARRTRRGKAVIGNAGRFSKVPGGDKPTKKTDLKYRCSECGKAHLREGWRAGRLTFQE.

Residues Cys11, Cys14, Cys72, and Cys75 each coordinate Zn(2+). The C4-type zinc-finger motif lies at 11-75 (CPHCHSHFEH…TDLKYRCSEC (65 aa)).

This sequence belongs to the eukaryotic ribosomal protein eL42 family. In terms of assembly, part of the 50S ribosomal subunit. Zn(2+) serves as cofactor.

Functionally, binds to the 23S rRNA. This Natronomonas pharaonis (strain ATCC 35678 / DSM 2160 / CIP 103997 / JCM 8858 / NBRC 14720 / NCIMB 2260 / Gabara) (Halobacterium pharaonis) protein is Large ribosomal subunit protein eL42 (rpl44e).